We begin with the raw amino-acid sequence, 811 residues long: Leucine--tRNA ligase (811 aa).

Positions 40–50 match the 'HIGH' region motif; sequence PYPSGRLHMGH. The 'KMSKS' region signature appears at 579 to 583; that stretch reads KMSKS. K582 is an ATP binding site.

This sequence belongs to the class-I aminoacyl-tRNA synthetase family.

It localises to the cytoplasm. The catalysed reaction is tRNA(Leu) + L-leucine + ATP = L-leucyl-tRNA(Leu) + AMP + diphosphate. This Campylobacter fetus subsp. fetus (strain 82-40) protein is Leucine--tRNA ligase.